The sequence spans 193 residues: Dual-action ribosomal maturation protein DarP (193 aa).

Belongs to the DarP family.

The protein localises to the cytoplasm. Functionally, member of a network of 50S ribosomal subunit biogenesis factors which assembles along the 30S-50S interface, preventing incorrect 23S rRNA structures from forming. Promotes peptidyl transferase center (PTC) maturation. In Vibrio cholerae serotype O1 (strain ATCC 39315 / El Tor Inaba N16961), this protein is Dual-action ribosomal maturation protein DarP.